Consider the following 248-residue polypeptide: NAD(P)H-quinone oxidoreductase subunit K (248 aa).

[4Fe-4S] cluster-binding residues include C66, C67, C131, and C162.

The protein belongs to the complex I 20 kDa subunit family. NDH-1 can be composed of about 15 different subunits; different subcomplexes with different compositions have been identified which probably have different functions. It depends on [4Fe-4S] cluster as a cofactor.

It localises to the cellular thylakoid membrane. The enzyme catalyses a plastoquinone + NADH + (n+1) H(+)(in) = a plastoquinol + NAD(+) + n H(+)(out). It catalyses the reaction a plastoquinone + NADPH + (n+1) H(+)(in) = a plastoquinol + NADP(+) + n H(+)(out). NDH-1 shuttles electrons from an unknown electron donor, via FMN and iron-sulfur (Fe-S) centers, to quinones in the respiratory and/or the photosynthetic chain. The immediate electron acceptor for the enzyme in this species is believed to be plastoquinone. Couples the redox reaction to proton translocation, and thus conserves the redox energy in a proton gradient. Cyanobacterial NDH-1 also plays a role in inorganic carbon-concentration. The sequence is that of NAD(P)H-quinone oxidoreductase subunit K from Synechococcus sp. (strain WH7803).